Here is a 394-residue protein sequence, read N- to C-terminus: uncharacterized protein (394 aa).

Helical transmembrane passes span 22–42 (VLVS…VLLH), 60–80 (LALF…LLLF), 81–101 (GFTG…APVA), 231–251 (LHLA…YLWL), 271–291 (GFCA…QLAP), 303–323 (LFLV…GDWP), 328–348 (LLGV…APWL), and 355–375 (ALGP…HAWM).

It localises to the cell membrane. This is an uncharacterized protein from Pseudomonas aeruginosa (strain ATCC 15692 / DSM 22644 / CIP 104116 / JCM 14847 / LMG 12228 / 1C / PRS 101 / PAO1).